Reading from the N-terminus, the 109-residue chain is Class I hydrophobin SC1 (109 aa).

Residues 1–22 form the signal peptide; that stretch reads MRFSLAILALPVLAAATAVPRG. 4 disulfide bridges follow: Cys-27/Cys-88, Cys-34/Cys-82, Cys-35/Cys-69, and Cys-89/Cys-102.

Belongs to the fungal hydrophobin family. Self-assembles to form functional amyloid fibrils called rodlets. Self-assembly into fibrillar rodlets occurs spontaneously at hydrophobic:hydrophilic interfaces and the rodlets further associate laterally to form amphipathic monolayers.

It localises to the secreted. It is found in the cell wall. Functionally, aerial growth, conidiation, and dispersal of filamentous fungi in the environment rely upon a capability of their secreting small amphipathic proteins called hydrophobins (HPBs) with low sequence identity. Class I can self-assemble into an outermost layer of rodlet bundles on aerial cell surfaces, conferring cellular hydrophobicity that supports fungal growth, development and dispersal; whereas Class II form highly ordered films at water-air interfaces through intermolecular interactions but contribute nothing to the rodlet structure. SC1 is a dikaryon-specific class I hydrophobin that contributes to the formation of aerial hyphae and fruiting bodies. This chain is Class I hydrophobin SC1, found in Schizophyllum commune (Split gill fungus).